A 532-amino-acid polypeptide reads, in one-letter code: Collagen alpha-1(XXIII) chain (532 aa).

Residues 1–23 (MGAGERAAGGGGTQDPGAGCGAR) lie on the Cytoplasmic side of the membrane. The chain crosses the membrane as a helical; Signal-anchor for type II membrane protein span at residues 24–45 (ALGALCLLLSVGSATACLLLGA). At 46-532 (QAAALHGRVA…GLPVPGCWHK (487 aa)) the chain is on the extracellular side. The disordered stretch occupies residues 102 to 532 (PSECICPPGP…GLPVPGCWHK (431 aa)). Collagen-like domains lie at 108–163 (PPGP…FGPR), 173–232 (GPPG…PGKK), 242–297 (GLPG…EQGD), and 313–372 (GPPG…MGLS). Composition is skewed to low complexity over residues 129–145 (QSGR…DGKP) and 157–172 (PGDF…DGAA). Composition is skewed to pro residues over residues 174-184 (PPGPPGPPGAR), 241-250 (PGLPGPPGPK), and 314-326 (PPGP…PPGI). Basic and acidic residues-rich tracts occupy residues 342-354 (DGEK…KGDP) and 380-393 (PKGE…DHLQ). Residues 403–414 (PGPPGPPGPPGP) show a composition bias toward pro residues. 2 Collagen-like domains span residues 404–452 (GPPG…GPPG) and 455–514 (GLPG…PGLD). Basic and acidic residues-rich tracts occupy residues 427–441 (DGAK…ERGP) and 478–495 (RGEK…ERGV).

Homotrimer. Post-translationally, undergoes proteolytic cleavage by furin protease to yield a 60 kDa soluble form that forms a homotrimer and exhibits a low affinity interaction with heparin.

It is found in the cell membrane. This is Collagen alpha-1(XXIII) chain (Col23a1) from Rattus norvegicus (Rat).